The chain runs to 376 residues: Queuine tRNA-ribosyltransferase (376 aa).

Catalysis depends on D90, which acts as the Proton acceptor. Substrate is bound by residues 90–94 (DSGGF), D144, Q193, and G220. The tract at residues 251 to 257 (GVGTPED) is RNA binding. The active-site Nucleophile is D270. The segment at 275 to 279 (TRNAR) is RNA binding; important for wobble base 34 recognition. C308, C310, C313, and H339 together coordinate Zn(2+).

The protein belongs to the queuine tRNA-ribosyltransferase family. Homodimer. Within each dimer, one monomer is responsible for RNA recognition and catalysis, while the other monomer binds to the replacement base PreQ1. Requires Zn(2+) as cofactor.

The catalysed reaction is 7-aminomethyl-7-carbaguanine + guanosine(34) in tRNA = 7-aminomethyl-7-carbaguanosine(34) in tRNA + guanine. The protein operates within tRNA modification; tRNA-queuosine biosynthesis. Catalyzes the base-exchange of a guanine (G) residue with the queuine precursor 7-aminomethyl-7-deazaguanine (PreQ1) at position 34 (anticodon wobble position) in tRNAs with GU(N) anticodons (tRNA-Asp, -Asn, -His and -Tyr). Catalysis occurs through a double-displacement mechanism. The nucleophile active site attacks the C1' of nucleotide 34 to detach the guanine base from the RNA, forming a covalent enzyme-RNA intermediate. The proton acceptor active site deprotonates the incoming PreQ1, allowing a nucleophilic attack on the C1' of the ribose to form the product. After dissociation, two additional enzymatic reactions on the tRNA convert PreQ1 to queuine (Q), resulting in the hypermodified nucleoside queuosine (7-(((4,5-cis-dihydroxy-2-cyclopenten-1-yl)amino)methyl)-7-deazaguanosine). This chain is Queuine tRNA-ribosyltransferase, found in Cupriavidus necator (strain ATCC 17699 / DSM 428 / KCTC 22496 / NCIMB 10442 / H16 / Stanier 337) (Ralstonia eutropha).